Reading from the N-terminus, the 102-residue chain is NADH-quinone oxidoreductase subunit K (102 aa).

Transmembrane regions (helical) follow at residues 5–25 (LGHY…GIFL), 31–51 (IVLL…FVAF), and 62–82 (VFVF…LAIL).

It belongs to the complex I subunit 4L family. In terms of assembly, NDH-1 is composed of 14 different subunits. Subunits NuoA, H, J, K, L, M, N constitute the membrane sector of the complex.

It localises to the cell inner membrane. The catalysed reaction is a quinone + NADH + 5 H(+)(in) = a quinol + NAD(+) + 4 H(+)(out). In terms of biological role, NDH-1 shuttles electrons from NADH, via FMN and iron-sulfur (Fe-S) centers, to quinones in the respiratory chain. The immediate electron acceptor for the enzyme in this species is believed to be ubiquinone. Couples the redox reaction to proton translocation (for every two electrons transferred, four hydrogen ions are translocated across the cytoplasmic membrane), and thus conserves the redox energy in a proton gradient. This is NADH-quinone oxidoreductase subunit K from Methylibium petroleiphilum (strain ATCC BAA-1232 / LMG 22953 / PM1).